Here is a 147-residue protein sequence, read N- to C-terminus: MLMPKRVKRRKVQRGRMKGKATRGNFIAYGDFGIQATECGWITSNQIEAARIAINRYVKRGGKVWIKIFPDKPVTEKPAETRMGSGKGSPEYWVAVVKPGRVLFEISGVSETVAREAMRLASHKLPVKTKFVTRRDFEEMGGEVNEG.

It belongs to the universal ribosomal protein uL16 family. Part of the 50S ribosomal subunit.

Functionally, binds 23S rRNA and is also seen to make contacts with the A and possibly P site tRNAs. This chain is Large ribosomal subunit protein uL16, found in Clostridium botulinum (strain ATCC 19397 / Type A).